The sequence spans 698 residues: Elongation factor G (698 aa).

A tr-type G domain is found at 8–284 (ANVRNIGIMA…AVVDYLPSPL (277 aa)). GTP is bound by residues 17–24 (AHIDAGKT), 81–85 (DTPGH), and 135–138 (NKLD).

It belongs to the TRAFAC class translation factor GTPase superfamily. Classic translation factor GTPase family. EF-G/EF-2 subfamily.

Its subcellular location is the cytoplasm. Functionally, catalyzes the GTP-dependent ribosomal translocation step during translation elongation. During this step, the ribosome changes from the pre-translocational (PRE) to the post-translocational (POST) state as the newly formed A-site-bound peptidyl-tRNA and P-site-bound deacylated tRNA move to the P and E sites, respectively. Catalyzes the coordinated movement of the two tRNA molecules, the mRNA and conformational changes in the ribosome. This is Elongation factor G from Salinispora tropica (strain ATCC BAA-916 / DSM 44818 / JCM 13857 / NBRC 105044 / CNB-440).